A 151-amino-acid polypeptide reads, in one-letter code: Phosphoribosyl-AMP cyclohydrolase (151 aa).

Residues 1 to 13 (MMTLTFASPPQNK) show a composition bias toward polar residues. The disordered stretch occupies residues 1 to 20 (MMTLTFASPPQNKSDLETGP). Asp93 serves as a coordination point for Mg(2+). Cys94 lines the Zn(2+) pocket. Positions 95 and 97 each coordinate Mg(2+). The Zn(2+) site is built by Cys112 and Cys119.

It belongs to the PRA-CH family. As to quaternary structure, homodimer. Requires Mg(2+) as cofactor. It depends on Zn(2+) as a cofactor.

It localises to the cytoplasm. It catalyses the reaction 1-(5-phospho-beta-D-ribosyl)-5'-AMP + H2O = 1-(5-phospho-beta-D-ribosyl)-5-[(5-phospho-beta-D-ribosylamino)methylideneamino]imidazole-4-carboxamide. It functions in the pathway amino-acid biosynthesis; L-histidine biosynthesis; L-histidine from 5-phospho-alpha-D-ribose 1-diphosphate: step 3/9. Its function is as follows. Catalyzes the hydrolysis of the adenine ring of phosphoribosyl-AMP. The polypeptide is Phosphoribosyl-AMP cyclohydrolase (Sinorhizobium medicae (strain WSM419) (Ensifer medicae)).